The primary structure comprises 797 residues: Plakophilin-3 (797 aa).

The segment at 58–81 is disordered; sequence GQQSRHNGSAELDGSAESARGMPR. An Omega-N-methylarginine modification is found at arginine 81. 3 positions are modified to phosphoserine: serine 123, serine 180, and serine 183. Tyrosine 195 is subject to Phosphotyrosine. The span at 219-228 shows a compositional bias: low complexity; sequence ASSGSSRAGG. The segment at 219–241 is disordered; sequence ASSGSSRAGGLDWPEATEGPPSR. Position 240 is a phosphoserine (serine 240). Threonine 250 bears the Phosphothreonine mark. Residues 253-274 are disordered; it reads RFQSSHRSRGGTGSVSGAGLEP. Omega-N-methylarginine is present on arginine 261. The required for interaction with SFN stretch occupies residues 283 to 288; that stretch reads SLSLSL. Serine 285, serine 313, serine 314, and serine 331 each carry phosphoserine. Residues 294–724 form a required for interaction with GSK3B region; it reads LPDVRGLDSY…AEVLVNIIAV (431 aa). ARM repeat units lie at residues 305–348, 351–390, 393–432, 449–487, 491–536, 596–637, 645–684, and 689–730; these read GHRT…HRCY, AAAK…NLIY, VDNK…NLSS, TDLV…NLSS, ATRQ…NLSY, PKGL…NITA, VLSR…NLSR, and KDEM…NLVV. A required for binding to PKP2 mRNA region spans residues 516-797; the sequence is VGKCEDKSVE…GYRKEDFLGP (282 aa).

This sequence belongs to the beta-catenin family. As to quaternary structure, found in a complex composed of CDH1, RAP1A and PKP3; PKP3 acts as a scaffold protein within the complex, the complex is required for CDH1 localization to mature desmosome cell junctions. Interacts with FXR1; the interaction facilitates the binding of PKP3 to PKP2 mRNA. Interacts (via ARM repeats) with GSK3B; the interaction may be involved in PKP3 protein degradation. Interacts with hyperphosphorylated and hypophosphorylated RB1; the interaction inhibits RB1 interaction with and repression of the transcription factor E2F1, potentially via sequestering RB1 to the cytoplasm. Interacts with CDKN1A; the interaction sequesters CDKN1A to the cytoplasm thereby repressing its role as an inhibitor of CDK4- and CDK6-driven RB1 phosphorylation. Interacts (via N-terminus) with SFN; the interaction maintains the cytoplasmic pool of PKP3, facilitates PKP3 exchange at desmosomes and restricts PKP3 localization to existing desmosome cell junctions. Interacts (via N-terminus) with JUP; the interaction is required for PKP3 localization to desmosome cell-cell junctions. Phosphorylated at Ser-285 when localized to the cytoplasm, PKP3 at desmosome cell junctions is not phosphorylated. Phosphorylation at Try-195 by SRC is induced by reactive oxygen species and potentially acts as a release mechanism from desmosome cell-cell junctions. Expressed in all layers of the epidermis, but is most abundant in the basal layer (at protein level). Expressed in keratinocytes of the epidermis at birth (at protein level). Expressed in the anagen non-keratinized inner root sheath cuticle and hair cuticle (at protein level). Also expressed in the matrix, precursors of the inner root sheath and hair shaft lineages (at protein level). Expressed at apical membranes in the outer hair root sheath and basal layer keratinocytes (at protein level). Expressed in intestinal epithelial cells and lamina propria of the ileum (at protein level). Expressed in keratinocytes (at protein level).

It is found in the nucleus. The protein resides in the cell junction. The protein localises to the desmosome. It localises to the cytoplasm. Its subcellular location is the cell membrane. It is found in the adherens junction. A component of desmosome cell-cell junctions which are required for positive regulation of cellular adhesion. Required for the localization of DSG2, DSP and PKP2 to mature desmosome junctions. May also play a role in the maintenance of DSG3 protein abundance in keratinocytes. Required for the formation of DSP-containing desmosome precursors in the cytoplasm during desmosome assembly. Also regulates the accumulation of CDH1 to mature desmosome junctions, via cAMP-dependent signaling and its interaction with activated RAP1A. Positively regulates the stabilization of PKP2 mRNA and therefore protein abundance, via its interaction with FXR1, may also regulate the protein abundance of DSP via the same mechanism. May also regulate the protein abundance of the desmosome component PKP1. Required for the organization of desmosome junctions at intercellular borders between basal keratinocytes of the epidermis, as a result plays a role in maintenance of the dermal barrier and regulation of the dermal inflammatory response. Required during epidermal keratinocyte differentiation for cell adherence at tricellular cell-cell contacts, via regulation of the timely formation of adherens junctions and desmosomes in a calcium-dependent manner, and may also play a role in the organization of the intracellular actin fiber belt. Acts as a negative regulator of the inflammatory response in hematopoietic cells of the skin and intestine, via modulation of proinflammatory cytokine production. Important for epithelial barrier maintenance in the intestine to reduce intestinal permeability, thereby plays a role in protection from intestinal-derived endotoxemia. Required for the development of hair follicles, via a role in the regulation of inner root sheaf length, correct alignment and anterior-posterior polarity of hair follicles. Promotes proliferation and cell-cycle G1/S phase transition of keratinocytes. Promotes E2F1-driven transcription of G1/S phase promoting genes by acting to release E2F1 from its inhibitory interaction with RB1, via sequestering RB1 and CDKN1A to the cytoplasm and thereby increasing CDK4- and CDK6-driven phosphorylation of RB1. May act as a scaffold protein to facilitate MAPK phosphorylation of RPS6KA protein family members and subsequently promote downstream EGFR signaling. May play a role in the positive regulation of transcription of Wnt-mediated TCF-responsive target genes. In Mus musculus (Mouse), this protein is Plakophilin-3 (Pkp3).